Reading from the N-terminus, the 152-residue chain is Snaclec coagulation factor IX/factor X-binding protein subunit A (152 aa).

The first 23 residues, 1-23, serve as a signal peptide directing secretion; that stretch reads MGRFIFVSFGLLVVAASLSGTGA. Disulfide bonds link Cys-25-Cys-36, Cys-53-Cys-150, and Cys-125-Cys-142. The 120-residue stretch at 32-151 folds into the C-type lectin domain; it reads YEGHCYKAFE…CGQRIPFVCE (120 aa). Positions 64, 66, and 70 each coordinate Ca(2+). Glu-151 lines the Ca(2+) pocket.

Belongs to the snaclec family. As to quaternary structure, heterodimer of subunits A and B; disulfide-linked. As to expression, expressed by the venom gland.

Its subcellular location is the secreted. In terms of biological role, anticoagulant protein which binds to the gamma-carboxyglutamic acid-domain regions of factors IX (F9) and factor X (F10) in the presence of calcium with a 1 to 1 stoichiometry. This Trimeresurus stejnegeri (Chinese green tree viper) protein is Snaclec coagulation factor IX/factor X-binding protein subunit A.